Consider the following 223-residue polypeptide: MOB kinase activator-like 4 (223 aa).

The segment at 1-21 (MKMADGSTILRRNRPGTKSKD) is disordered. The Zn(2+) site is built by C92, C97, H169, and H174.

The protein belongs to the MOB1/phocein family.

This is MOB kinase activator-like 4 (Mob4) from Drosophila melanogaster (Fruit fly).